Reading from the N-terminus, the 202-residue chain is Thymidylate kinase (202 aa).

7-14 (GTEGVGKT) contacts ATP.

This sequence belongs to the thymidylate kinase family.

The catalysed reaction is dTMP + ATP = dTDP + ADP. Functionally, phosphorylation of dTMP to form dTDP in both de novo and salvage pathways of dTTP synthesis. This chain is Thymidylate kinase, found in Acinetobacter baylyi (strain ATCC 33305 / BD413 / ADP1).